We begin with the raw amino-acid sequence, 311 residues long: Pantothenate synthetase (311 aa).

43–50 (MGALHEGH) is a binding site for ATP. The active-site Proton donor is the His-50. Gln-75 is a (R)-pantoate binding site. Gln-75 lines the beta-alanine pocket. 161 to 164 (GEKD) is a binding site for ATP. Gln-167 is a (R)-pantoate binding site. Residues Val-190 and 198-201 (MSSR) each bind ATP.

The protein belongs to the pantothenate synthetase family. As to quaternary structure, homodimer.

The protein resides in the cytoplasm. The catalysed reaction is (R)-pantoate + beta-alanine + ATP = (R)-pantothenate + AMP + diphosphate + H(+). It participates in cofactor biosynthesis; (R)-pantothenate biosynthesis; (R)-pantothenate from (R)-pantoate and beta-alanine: step 1/1. Functionally, catalyzes the condensation of pantoate with beta-alanine in an ATP-dependent reaction via a pantoyl-adenylate intermediate. In Mycolicibacterium vanbaalenii (strain DSM 7251 / JCM 13017 / BCRC 16820 / KCTC 9966 / NRRL B-24157 / PYR-1) (Mycobacterium vanbaalenii), this protein is Pantothenate synthetase.